Consider the following 64-residue polypeptide: Putative calcium channel toxin Tx758 (64 aa).

Residues 1-18 form the signal peptide; the sequence is MSTFVIVFLLLTAVLCHA. Positions 19–27 are excised as a propeptide; it reads EPALDETAR. Disulfide bonds link cysteine 29–cysteine 43, cysteine 36–cysteine 49, and cysteine 42–cysteine 58.

This sequence belongs to the scorpion calcin-like family. In terms of tissue distribution, expressed by the venom gland.

The protein resides in the secreted. Functionally, may increase intracellular calcium release through the activation of nuclear inositol 1,4,5-trisphosphate receptors (ITPR) of cardiomyocytes, thereby causing an increase in the contraction frequency of these cells. This is Putative calcium channel toxin Tx758 from Buthus israelis (Israeli scorpion).